Reading from the N-terminus, the 515-residue chain is Bifunctional purine biosynthesis protein PurH (515 aa).

Residues 1–145 (MTKRVLISVS…KNHASVTVVV (145 aa)) enclose the MGS-like domain.

The protein belongs to the PurH family.

The catalysed reaction is (6R)-10-formyltetrahydrofolate + 5-amino-1-(5-phospho-beta-D-ribosyl)imidazole-4-carboxamide = 5-formamido-1-(5-phospho-D-ribosyl)imidazole-4-carboxamide + (6S)-5,6,7,8-tetrahydrofolate. It carries out the reaction IMP + H2O = 5-formamido-1-(5-phospho-D-ribosyl)imidazole-4-carboxamide. The protein operates within purine metabolism; IMP biosynthesis via de novo pathway; 5-formamido-1-(5-phospho-D-ribosyl)imidazole-4-carboxamide from 5-amino-1-(5-phospho-D-ribosyl)imidazole-4-carboxamide (10-formyl THF route): step 1/1. It participates in purine metabolism; IMP biosynthesis via de novo pathway; IMP from 5-formamido-1-(5-phospho-D-ribosyl)imidazole-4-carboxamide: step 1/1. The sequence is that of Bifunctional purine biosynthesis protein PurH from Streptococcus pneumoniae (strain P1031).